Consider the following 705-residue polypeptide: Elongation factor G (705 aa).

Residues 8 to 290 (HRYRNIGIMA…GVIHLLPSPA (283 aa)) enclose the tr-type G domain. Residues 17 to 24 (AHIDAGKT), 88 to 92 (DTPGH), and 142 to 145 (NKMD) contribute to the GTP site.

The protein belongs to the TRAFAC class translation factor GTPase superfamily. Classic translation factor GTPase family. EF-G/EF-2 subfamily.

It localises to the cytoplasm. In terms of biological role, catalyzes the GTP-dependent ribosomal translocation step during translation elongation. During this step, the ribosome changes from the pre-translocational (PRE) to the post-translocational (POST) state as the newly formed A-site-bound peptidyl-tRNA and P-site-bound deacylated tRNA move to the P and E sites, respectively. Catalyzes the coordinated movement of the two tRNA molecules, the mRNA and conformational changes in the ribosome. This Xylella fastidiosa (strain 9a5c) protein is Elongation factor G.